A 513-amino-acid chain; its full sequence is Na(+)/H(+) antiporter NhaB (513 aa).

Transmembrane regions (helical) follow at residues 23-43 (LALI…PFVA), 52-72 (IFTL…LLAI), 97-117 (LLLM…LFIF), 120-140 (LLLS…AAAF), 144-164 (FLDA…FYGI), 202-222 (LMMH…VGEP), 238-258 (FFLR…LTCL), 303-323 (AIIG…VGLI), 348-368 (TESL…AVII), 391-411 (LFYI…VGTI), 447-467 (ATPN…APLI), and 475-495 (VWMA…CVEF).

It belongs to the NhaB Na(+)/H(+) (TC 2.A.34) antiporter family.

It localises to the cell inner membrane. The catalysed reaction is 2 Na(+)(in) + 3 H(+)(out) = 2 Na(+)(out) + 3 H(+)(in). Na(+)/H(+) antiporter that extrudes sodium in exchange for external protons. This Escherichia coli O127:H6 (strain E2348/69 / EPEC) protein is Na(+)/H(+) antiporter NhaB.